A 67-amino-acid chain; its full sequence is DNA-directed RNA polymerase subunit omega (67 aa).

This sequence belongs to the RNA polymerase subunit omega family. In terms of assembly, RNAP is composed of a core of 2 alpha, a beta and a beta' subunit. The core is associated with a delta subunit, and at least one of epsilon or omega. When a sigma factor is associated with the core the holoenzyme is formed, which can initiate transcription.

It carries out the reaction RNA(n) + a ribonucleoside 5'-triphosphate = RNA(n+1) + diphosphate. Its function is as follows. Promotes RNA polymerase assembly. Latches the N- and C-terminal regions of the beta' subunit thereby facilitating its interaction with the beta and alpha subunits. In vitro reconstitution experiments this subunit is dispensible. This Bacillus subtilis (strain 168) protein is DNA-directed RNA polymerase subunit omega (rpoZ).